We begin with the raw amino-acid sequence, 399 residues long: Galactokinase (399 aa).

Residue 42–45 participates in substrate binding; that stretch reads EHTD. ATP is bound by residues S76 and 133–139; that span reads ASGLSSS. Mg(2+)-binding residues include S139 and E171. The active-site Proton acceptor is D183. Y233 serves as a coordination point for substrate.

Belongs to the GHMP kinase family. GalK subfamily. As to quaternary structure, monomer.

It localises to the cytoplasm. It catalyses the reaction alpha-D-galactose + ATP = alpha-D-galactose 1-phosphate + ADP + H(+). The protein operates within carbohydrate metabolism; galactose metabolism. In terms of biological role, catalyzes the transfer of the gamma-phosphate of ATP to D-galactose to form alpha-D-galactose-1-phosphate (Gal-1-P). This Lactococcus lactis subsp. lactis (strain IL1403) (Streptococcus lactis) protein is Galactokinase.